A 498-amino-acid chain; its full sequence is Sulfate adenylyltransferase subunit 1 (498 aa).

Residues 30–246 (TRPLRLITCG…LELATTRSAQ (217 aa)) form the tr-type G domain. Residues 39–46 (GSVDDGKS) are G1. Position 39–46 (39–46 (GSVDDGKS)) interacts with GTP. A G2 region spans residues 97–101 (GITID). Residues 118 to 121 (DTPG) form a G3 region. GTP contacts are provided by residues 118–122 (DTPGH) and 173–176 (NKID). Residues 173 to 176 (NKID) form a G4 region. Residues 210–212 (SAL) form a G5 region.

The protein belongs to the TRAFAC class translation factor GTPase superfamily. Classic translation factor GTPase family. CysN/NodQ subfamily. As to quaternary structure, heterodimer composed of CysD, the smaller subunit, and CysN.

The catalysed reaction is sulfate + ATP + H(+) = adenosine 5'-phosphosulfate + diphosphate. It participates in sulfur metabolism; hydrogen sulfide biosynthesis; sulfite from sulfate: step 1/3. With CysD forms the ATP sulfurylase (ATPS) that catalyzes the adenylation of sulfate producing adenosine 5'-phosphosulfate (APS) and diphosphate, the first enzymatic step in sulfur assimilation pathway. APS synthesis involves the formation of a high-energy phosphoric-sulfuric acid anhydride bond driven by GTP hydrolysis by CysN coupled to ATP hydrolysis by CysD. This chain is Sulfate adenylyltransferase subunit 1, found in Rhizobium meliloti (strain 1021) (Ensifer meliloti).